The following is a 439-amino-acid chain: Trigger factor (439 aa).

In terms of domain architecture, PPIase FKBP-type spans 158-233 (GDVINIEYTI…IKEVLKRTLM (76 aa)). The disordered stretch occupies residues 410 to 439 (KEISADEPVEEQKEEEEKEEAGSENSENKE). Residues 414–428 (ADEPVEEQKEEEEKE) are compositionally biased toward acidic residues.

Belongs to the FKBP-type PPIase family. Tig subfamily.

The protein localises to the cytoplasm. The catalysed reaction is [protein]-peptidylproline (omega=180) = [protein]-peptidylproline (omega=0). In terms of biological role, involved in protein export. Acts as a chaperone by maintaining the newly synthesized protein in an open conformation. Functions as a peptidyl-prolyl cis-trans isomerase. This chain is Trigger factor, found in Kosmotoga olearia (strain ATCC BAA-1733 / DSM 21960 / TBF 19.5.1).